The sequence spans 500 residues: Xylan O-acetyltransferase 2 (500 aa).

The Cytoplasmic portion of the chain corresponds to 1–25 (MGLPGRRNPLLSARRAAASLRRSRR). Residues 26-43 (LPVYVAAVFFVASVLLMF) traverse the membrane as a helical; Signal-anchor for type II membrane protein segment. The Lumenal segment spans residues 44-500 (RDEILYLTTA…RPPAAAGHVA (457 aa)). Positions 84–116 (PVLLGHGGKPEKHHSVTERHRPKVSAKRRPNKK) are disordered. The segment covering 91-102 (GKPEKHHSVTER) has biased composition (basic and acidic residues). The segment covering 103-116 (HRPKVSAKRRPNKK) has biased composition (basic residues). Disulfide bonds link C143-C194, C165-C231, C174-C472, and C388-C468. N-linked (GlcNAc...) asparagine glycans are attached at residues N144 and N154. The GDS motif signature appears at 218–220 (GDS). S220 acts as the Nucleophile in catalysis. N-linked (GlcNAc...) asparagine glycosylation is found at N260 and N416. The Proton donor role is filled by D467. The short motif at 467-470 (DCIH) is the DXXH motif element. Catalysis depends on H470, which acts as the Proton acceptor.

It belongs to the PC-esterase family. TBL subfamily. As to expression, expressed at low levels in roots and leaves.

Its subcellular location is the golgi apparatus membrane. In terms of biological role, xylan acetyltransferase required for 2-O- and 3-O-monoacetylation of xylosyl residues in xylan. Catalyzes the 2-O-acetylation of xylan, followed by nonenzymatic acetyl migration to the O-3 position, resulting in products that are monoacetylated at both O-2 and O-3 positions. The protein is Xylan O-acetyltransferase 2 of Oryza sativa subsp. japonica (Rice).